Reading from the N-terminus, the 147-residue chain is Large ribosomal subunit protein bL9 (147 aa).

This sequence belongs to the bacterial ribosomal protein bL9 family.

Binds to the 23S rRNA. This is Large ribosomal subunit protein bL9 from Flavobacterium psychrophilum (strain ATCC 49511 / DSM 21280 / CIP 103535 / JIP02/86).